Here is a 138-residue protein sequence, read N- to C-terminus: Putative pre-16S rRNA nuclease (138 aa).

Belongs to the YqgF nuclease family.

It localises to the cytoplasm. Its function is as follows. Could be a nuclease involved in processing of the 5'-end of pre-16S rRNA. The polypeptide is Putative pre-16S rRNA nuclease (Bacteroides thetaiotaomicron (strain ATCC 29148 / DSM 2079 / JCM 5827 / CCUG 10774 / NCTC 10582 / VPI-5482 / E50)).